Consider the following 154-residue polypeptide: SsrA-binding protein (154 aa).

The segment at 134 to 154 (KRQAIKERQTQREIQRELKER) is disordered.

The protein belongs to the SmpB family.

It localises to the cytoplasm. In terms of biological role, required for rescue of stalled ribosomes mediated by trans-translation. Binds to transfer-messenger RNA (tmRNA), required for stable association of tmRNA with ribosomes. tmRNA and SmpB together mimic tRNA shape, replacing the anticodon stem-loop with SmpB. tmRNA is encoded by the ssrA gene; the 2 termini fold to resemble tRNA(Ala) and it encodes a 'tag peptide', a short internal open reading frame. During trans-translation Ala-aminoacylated tmRNA acts like a tRNA, entering the A-site of stalled ribosomes, displacing the stalled mRNA. The ribosome then switches to translate the ORF on the tmRNA; the nascent peptide is terminated with the 'tag peptide' encoded by the tmRNA and targeted for degradation. The ribosome is freed to recommence translation, which seems to be the essential function of trans-translation. The chain is SsrA-binding protein from Synechococcus sp. (strain JA-2-3B'a(2-13)) (Cyanobacteria bacterium Yellowstone B-Prime).